Here is a 1309-residue protein sequence, read N- to C-terminus: Target of rapamycin complex 2 subunit ste20 (1309 aa).

Residues 24-110 (DFIKKMNTTD…IESFQGENGE (87 aa)) form the REM-1 domain. The segment at 105–128 (QGENGEAKTGSTSLTRSASATVSR) is disordered. Polar residues predominate over residues 113–128 (TGSTSLTRSASATVSR). Phosphoserine is present on S151. Positions 183-205 (NVNEKNNSSSEDTQPNGKRPSSL) are disordered. The span at 194-205 (DTQPNGKRPSSL) shows a compositional bias: polar residues. The next 6 membrane-spanning stretches (helical) occupy residues 285 to 305 (LFLDATAFSCCQMLNLPWILS), 392 to 412 (LIDGSISENLAASAALALVYL), 504 to 524 (VIDLFFLIFQVEYSSWSESFL), 564 to 584 (TAVLLFIFLELGLVESIVCMI), 926 to 946 (LNHWAISLLIFQLYDPCLEVC), and 984 to 1004 (LLLRFLATTVGFHYLSEINFI). T1203 is subject to Phosphothreonine.

This sequence belongs to the RICTOR family. In terms of assembly, the target of rapamycin complex 2 (TORC2) is composed of at least bit61, pop3/wat1, sin1, ste20 and tor1. Either Ser-203 or Ser-204 are phosphorylated as well.

Its subcellular location is the membrane. Functionally, component of TORC2, which regulates multiple cellular processes to control cell growth in response to environmental signals. TORC2 is required for cell survival under various stress conditions. TORC2 positively controls G1 cell-cycle arrest, sexual development and amino acid uptake. Positively regulates amino acid uptake through the control of expression of amino acid permeases. The protein is Target of rapamycin complex 2 subunit ste20 of Schizosaccharomyces pombe (strain 972 / ATCC 24843) (Fission yeast).